Here is a 390-residue protein sequence, read N- to C-terminus: GTPase Obg (390 aa).

The Obg domain occupies 1-159; the sequence is MKFVDEASVK…RELRLELLLL (159 aa). One can recognise an OBG-type G domain in the interval 160–333; sequence ADVGMLGLPN…LCFKLGEFME (174 aa). GTP-binding positions include 166–173, 191–195, 213–216, 283–286, and 314–316; these read GLPNAGKS, FTTLI, DIPG, NKVD, and SAV. Positions 173 and 193 each coordinate Mg(2+).

It belongs to the TRAFAC class OBG-HflX-like GTPase superfamily. OBG GTPase family. Monomer. Mg(2+) serves as cofactor.

It localises to the cytoplasm. In terms of biological role, an essential GTPase which binds GTP, GDP and possibly (p)ppGpp with moderate affinity, with high nucleotide exchange rates and a fairly low GTP hydrolysis rate. Plays a role in control of the cell cycle, stress response, ribosome biogenesis and in those bacteria that undergo differentiation, in morphogenesis control. This Vibrio atlanticus (strain LGP32) (Vibrio splendidus (strain Mel32)) protein is GTPase Obg.